We begin with the raw amino-acid sequence, 156 residues long: Ribosome maturation factor RimP (156 aa).

It belongs to the RimP family.

It localises to the cytoplasm. Functionally, required for maturation of 30S ribosomal subunits. The polypeptide is Ribosome maturation factor RimP (Dictyoglomus turgidum (strain DSM 6724 / Z-1310)).